The chain runs to 346 residues: Olfactory receptor 13D1 (346 aa).

Residues 1–57 are Extracellular-facing; sequence MYRFTDFDVSNISIYLNHVLFYTTQQAGDLEHMETRNYSAMTEFFLVGLSQYPELQL. N-linked (GlcNAc...) asparagine glycosylation occurs at Asn37. The helical transmembrane segment at 58 to 78 threads the bilayer; that stretch reads FLFLLCLIMYMIILLGNSLLI. Residues 79–86 lie on the Cytoplasmic side of the membrane; the sequence is IITILDSR. The helical transmembrane segment at 87–107 threads the bilayer; the sequence is LHTPMYFFLGNLSFLDICYTS. Residues 108-131 lie on the Extracellular side of the membrane; it reads SSIPPMLIIFMSERKSISFIGCAL. The cysteines at positions 129 and 221 are disulfide-linked. The helical transmembrane segment at 132–152 threads the bilayer; the sequence is QMVVSLGLGSTECVLLAVMAY. The Cytoplasmic portion of the chain corresponds to 153-171; sequence DHYVAICNPLRYSIIMNGV. A helical transmembrane segment spans residues 172 to 192; it reads LYVQMAAWSWIIGCLTSLLQT. At 193–229 the chain is on the extracellular side; that stretch reads VLTMMLPFCGNNVIDHITCEILALLKLVCSDITINVL. A helical membrane pass occupies residues 230 to 249; the sequence is IMTVTNIVSLVILLLLIFIS. Over 250–269 the chain is Cytoplasmic; sequence YVFILSSILRINCAEGRKKA. Residues 270 to 290 traverse the membrane as a helical segment; sequence FSTCSAHSIVVILFYGSALFM. The Extracellular segment spans residues 291 to 303; sequence YMKPKSKNTNTSD. Residue Asn300 is glycosylated (N-linked (GlcNAc...) asparagine). A helical transmembrane segment spans residues 304-324; that stretch reads EIIGLSYGVVSPMLNPIIYSL. Over 325-346 the chain is Cytoplasmic; it reads RNKEVKEAVKKVLSRHLHLLKM.

The protein belongs to the G-protein coupled receptor 1 family.

It localises to the cell membrane. Functionally, odorant receptor. This is Olfactory receptor 13D1 (OR13D1) from Homo sapiens (Human).